We begin with the raw amino-acid sequence, 78 residues long: Calcium/calmodulin-dependent protein kinase II inhibitor 1 (78 aa).

The tract at residues 41-68 is CAMK2 inhibitory domain; sequence SKRPPKLGQIGRSKRVVIEDDRIDDVLK.

Belongs to the CAMK2N family. In terms of assembly, interacts with CAMK2B; the presence of Ca(2+)/calmodulin increases the interaction but is not essential. Interacts with CAMK2A; this interaction requires CAMK2A activation by Ca(2+). Expressed in the brain (at protein level). Expressed in cardiomyocytes but not cardiac fibroblasts (at protein level).

It is found in the synapse. The protein localises to the cell projection. The protein resides in the dendrite. Its subcellular location is the postsynaptic density. Potent and specific inhibitor of CaM-kinase II (CAMK2). Plays a role in the maintenance of long-term retrieval-induced memory in response to contextual fear. Modulates blood pressure and vascular reactivity via regulation of CAMK2 activity in addition to regulation of left ventricular mass. Mediates the NLRP3 inflammasome in cardiomyocytes via acting as an inhibitor of the MAPK14/p38 and MAPK8/JNK pathways, thereby regulating ventricular remodeling and cardiac rhythm post-myocardial infarction. Negatively effects insulin sensitivity and promotes lipid formation in adipose tissues independent of CAMK2 signaling. The protein is Calcium/calmodulin-dependent protein kinase II inhibitor 1 (Camk2n1) of Mus musculus (Mouse).